We begin with the raw amino-acid sequence, 327 residues long: MIDVSGKIRAWGRWLLVGAAATLPSLISLAGGAATASAFSRPGLPVEYLQVPSEAMGRSIKVQFQNGGNGSPAVYLLDGLRAQDDYNGWDINTSAFEWYYQSGLSVVMPVGGQSSFYSDWYSPACGKAGCTTYKWETFLTSELPKWLSANRSVKSTGSAVVGLSMAGSSALILAAYHPDQFIYAGSLSALMDSSQGIEPQLIGLAMGDAGGYKAADMWGPPNDPAWQRNDPILQAGKLVANNTHLWVYCGNGTPSELGGTNVPAEFLENFVHGSNLKFQDAYNGAGGHNAVFNLNADGTHSWEYWGAQLNAMKPDLQNTLMAVPRSG.

The first 38 residues, 1 to 38, serve as a signal peptide directing secretion; it reads MIDVSGKIRAWGRWLLVGAAATLPSLISLAGGAATASA. 80-81 is a substrate binding site; the sequence is LR. Residues 96 to 106 are fibronectin-binding; that stretch reads FEWYYQSGLSV. Cys125 and Cys130 are disulfide-bonded. Positions 164 and 192 each coordinate substrate. The active-site Nucleophile is the Ser164. The active site involves Glu268. Residues 270–273, Lys277, and 300–302 each bind substrate; these read FVHG and HSW. His300 is a catalytic residue.

The protein belongs to the mycobacterial A85 antigen family.

It localises to the secreted. The enzyme catalyses 2 alpha,alpha'-trehalose 6-mycolate = alpha,alpha'-trehalose 6,6'-bismycolate + alpha,alpha-trehalose. It carries out the reaction an acyl-CoA + a 1,2-diacyl-sn-glycerol = a triacyl-sn-glycerol + CoA. Its function is as follows. The antigen 85 proteins (FbpA, FbpB, FbpC) are responsible for the high affinity of mycobacteria for fibronectin, a large adhesive glycoprotein, which facilitates the attachment of M.tuberculosis to murine alveolar macrophages (AMs). They also help to maintain the integrity of the cell wall by catalyzing the transfer of mycolic acids to cell wall arabinogalactan and through the synthesis of alpha,alpha-trehalose dimycolate (TDM, cord factor). They catalyze the transfer of a mycoloyl residue from one molecule of alpha,alpha-trehalose monomycolate (TMM) to another TMM, leading to the formation of TDM. The polypeptide is Diacylglycerol acyltransferase/mycolyltransferase Ag85B (fbpB) (Mycobacterium leprae (strain TN)).